Consider the following 487-residue polypeptide: 3-octaprenyl-4-hydroxybenzoate carboxy-lyase (487 aa).

Residue Asn-172 coordinates Mn(2+). Residues 175–177 (IYR), 189–191 (RWL), and 194–195 (RG) each bind prenylated FMN. Residue Glu-238 coordinates Mn(2+). Asp-287 serves as the catalytic Proton donor.

This sequence belongs to the UbiD family. Homohexamer. The cofactor is prenylated FMN. Mn(2+) serves as cofactor.

Its subcellular location is the cell membrane. The catalysed reaction is a 4-hydroxy-3-(all-trans-polyprenyl)benzoate + H(+) = a 2-(all-trans-polyprenyl)phenol + CO2. Its pathway is cofactor biosynthesis; ubiquinone biosynthesis. Its function is as follows. Catalyzes the decarboxylation of 3-octaprenyl-4-hydroxy benzoate to 2-octaprenylphenol, an intermediate step in ubiquinone biosynthesis. This is 3-octaprenyl-4-hydroxybenzoate carboxy-lyase from Blochmanniella pennsylvanica (strain BPEN).